We begin with the raw amino-acid sequence, 339 residues long: Holliday junction branch migration complex subunit RuvB (339 aa).

The segment at 1 to 22 (MIDADPTLRPEPLPEDNDRALR) is disordered. The interval 1–182 (MIDADPTLRP…FGIPTRLQFY (182 aa)) is large ATPase domain (RuvB-L). ATP is bound by residues leucine 21, arginine 22, glycine 63, lysine 66, threonine 67, threonine 68, 129–131 (EDF), arginine 172, tyrosine 182, and arginine 219. Position 67 (threonine 67) interacts with Mg(2+). Residues 183–253 (TIDELFEIVS…LADGALTRLG (71 aa)) are small ATPAse domain (RuvB-S). A head domain (RuvB-H) region spans residues 256-339 (QLGLDGADRR…PPKSQSDLFG (84 aa)). DNA contacts are provided by arginine 292, arginine 311, and arginine 316.

It belongs to the RuvB family. Homohexamer. Forms an RuvA(8)-RuvB(12)-Holliday junction (HJ) complex. HJ DNA is sandwiched between 2 RuvA tetramers; dsDNA enters through RuvA and exits via RuvB. An RuvB hexamer assembles on each DNA strand where it exits the tetramer. Each RuvB hexamer is contacted by two RuvA subunits (via domain III) on 2 adjacent RuvB subunits; this complex drives branch migration. In the full resolvosome a probable DNA-RuvA(4)-RuvB(12)-RuvC(2) complex forms which resolves the HJ.

It localises to the cytoplasm. It catalyses the reaction ATP + H2O = ADP + phosphate + H(+). The RuvA-RuvB-RuvC complex processes Holliday junction (HJ) DNA during genetic recombination and DNA repair, while the RuvA-RuvB complex plays an important role in the rescue of blocked DNA replication forks via replication fork reversal (RFR). RuvA specifically binds to HJ cruciform DNA, conferring on it an open structure. The RuvB hexamer acts as an ATP-dependent pump, pulling dsDNA into and through the RuvAB complex. RuvB forms 2 homohexamers on either side of HJ DNA bound by 1 or 2 RuvA tetramers; 4 subunits per hexamer contact DNA at a time. Coordinated motions by a converter formed by DNA-disengaged RuvB subunits stimulates ATP hydrolysis and nucleotide exchange. Immobilization of the converter enables RuvB to convert the ATP-contained energy into a lever motion, pulling 2 nucleotides of DNA out of the RuvA tetramer per ATP hydrolyzed, thus driving DNA branch migration. The RuvB motors rotate together with the DNA substrate, which together with the progressing nucleotide cycle form the mechanistic basis for DNA recombination by continuous HJ branch migration. Branch migration allows RuvC to scan DNA until it finds its consensus sequence, where it cleaves and resolves cruciform DNA. The polypeptide is Holliday junction branch migration complex subunit RuvB (Ruegeria sp. (strain TM1040) (Silicibacter sp.)).